The following is a 485-amino-acid chain: Glutamyl-tRNA(Gln) amidotransferase subunit A (485 aa).

Residues Lys-78 and Ser-153 each act as charge relay system in the active site. The active-site Acyl-ester intermediate is the Ser-177.

The protein belongs to the amidase family. GatA subfamily. In terms of assembly, heterotrimer of A, B and C subunits.

The enzyme catalyses L-glutamyl-tRNA(Gln) + L-glutamine + ATP + H2O = L-glutaminyl-tRNA(Gln) + L-glutamate + ADP + phosphate + H(+). Allows the formation of correctly charged Gln-tRNA(Gln) through the transamidation of misacylated Glu-tRNA(Gln) in organisms which lack glutaminyl-tRNA synthetase. The reaction takes place in the presence of glutamine and ATP through an activated gamma-phospho-Glu-tRNA(Gln). In Bacillus cereus (strain G9842), this protein is Glutamyl-tRNA(Gln) amidotransferase subunit A.